Here is a 268-residue protein sequence, read N- to C-terminus: Putative esterase/lipase 2 (268 aa).

His-28 is a catalytic residue. The Charge relay system role is filled by His-96.

It belongs to the lipase/esterase LIP3/BchO family.

The polypeptide is Putative esterase/lipase 2 (Mycoplasma pneumoniae (strain ATCC 29342 / M129 / Subtype 1) (Mycoplasmoides pneumoniae)).